We begin with the raw amino-acid sequence, 351 residues long: Photosystem II D2 protein (351 aa).

The helical transmembrane segment at 39–59 threads the bilayer; sequence TAYLAVGGWMTGTTFVTSWYT. Position 116 (histidine 116) interacts with chlorophyll a. A helical membrane pass occupies residues 123-139; it reads GFCLRQFEIARLVGIRP. Pheophytin a is bound by residues glutamine 128 and asparagine 141. A helical transmembrane segment spans residues 151-164; the sequence is VFVSVFLLYPLGQA. A chlorophyll a-binding site is contributed by histidine 196. A helical transmembrane segment spans residues 206-226; it reads GALLCAIHGATVENTLFEDGD. Positions 213 and 260 each coordinate a plastoquinone. Histidine 213 is a binding site for Fe cation. Histidine 267 contacts Fe cation. Residues 277 to 293 form a helical membrane-spanning segment; sequence GLWTSAIGIVGLALNLR.

This sequence belongs to the reaction center PufL/M/PsbA/D family. As to quaternary structure, PSII is composed of 1 copy each of membrane proteins PsbA, PsbB, PsbC, PsbD, PsbE, PsbF, PsbH, PsbI, PsbJ, PsbK, PsbL, PsbM, PsbT, PsbX, PsbY, PsbZ, Psb30/Ycf12, at least 3 peripheral proteins of the oxygen-evolving complex and a large number of cofactors. It forms dimeric complexes. The D1/D2 heterodimer binds P680, chlorophylls that are the primary electron donor of PSII, and subsequent electron acceptors. It shares a non-heme iron and each subunit binds pheophytin, quinone, additional chlorophylls, carotenoids and lipids. There is also a Cl(-1) ion associated with D1 and D2, which is required for oxygen evolution. The PSII complex binds additional chlorophylls, carotenoids and specific lipids. serves as cofactor.

The protein localises to the plastid. Its subcellular location is the chloroplast thylakoid membrane. It catalyses the reaction 2 a plastoquinone + 4 hnu + 2 H2O = 2 a plastoquinol + O2. Photosystem II (PSII) is a light-driven water:plastoquinone oxidoreductase that uses light energy to abstract electrons from H(2)O, generating O(2) and a proton gradient subsequently used for ATP formation. It consists of a core antenna complex that captures photons, and an electron transfer chain that converts photonic excitation into a charge separation. The D1/D2 (PsbA/PsbD) reaction center heterodimer binds P680, the primary electron donor of PSII as well as several subsequent electron acceptors. D2 is needed for assembly of a stable PSII complex. This Phaeodactylum tricornutum (strain CCAP 1055/1) protein is Photosystem II D2 protein.